A 440-amino-acid chain; its full sequence is Glutamyl-tRNA reductase (440 aa).

Substrate contacts are provided by residues 50–53 (TCNR), serine 109, 114–116 (EPQ), and glutamine 120. The active-site Nucleophile is the cysteine 51. NADP(+) is bound at residue 189–194 (GAGEMA).

This sequence belongs to the glutamyl-tRNA reductase family. As to quaternary structure, homodimer.

The enzyme catalyses (S)-4-amino-5-oxopentanoate + tRNA(Glu) + NADP(+) = L-glutamyl-tRNA(Glu) + NADPH + H(+). It participates in porphyrin-containing compound metabolism; protoporphyrin-IX biosynthesis; 5-aminolevulinate from L-glutamyl-tRNA(Glu): step 1/2. Catalyzes the NADPH-dependent reduction of glutamyl-tRNA(Glu) to glutamate 1-semialdehyde (GSA). The sequence is that of Glutamyl-tRNA reductase from Nitratidesulfovibrio vulgaris (strain DP4) (Desulfovibrio vulgaris).